We begin with the raw amino-acid sequence, 513 residues long: Putative GMP synthase [glutamine-hydrolyzing] (513 aa).

Residues 8–198 form the Glutamine amidotransferase type-1 domain; sequence MIVVLDFGGQ…AFAVCGCEGN (191 aa). Cysteine 85 serves as the catalytic Nucleophile. Residue glutamate 174 is part of the active site. The GMPS ATP-PPase domain maps to 199–388; sequence WSMENFIELE…LGIPDEVVWR (190 aa). Residue 226–232 coordinates ATP; the sequence is SGGVDSS.

Homodimer.

It catalyses the reaction XMP + L-glutamine + ATP + H2O = GMP + L-glutamate + AMP + diphosphate + 2 H(+). The protein operates within purine metabolism; GMP biosynthesis; GMP from XMP (L-Gln route): step 1/1. Functionally, catalyzes the synthesis of GMP from XMP. In Halalkalibacterium halodurans (strain ATCC BAA-125 / DSM 18197 / FERM 7344 / JCM 9153 / C-125) (Bacillus halodurans), this protein is Putative GMP synthase [glutamine-hydrolyzing] (guaA).